The primary structure comprises 339 residues: UDP-N-acetylenolpyruvoylglucosamine reductase (339 aa).

Residues 19–189 form the FAD-binding PCMH-type domain; that stretch reads VDVQARLFAE…LRVRFKLSRV (171 aa). R166 is a catalytic residue. Residue S239 is the Proton donor of the active site. E335 is a catalytic residue.

The protein belongs to the MurB family. Requires FAD as cofactor.

It localises to the cytoplasm. The enzyme catalyses UDP-N-acetyl-alpha-D-muramate + NADP(+) = UDP-N-acetyl-3-O-(1-carboxyvinyl)-alpha-D-glucosamine + NADPH + H(+). Its pathway is cell wall biogenesis; peptidoglycan biosynthesis. Functionally, cell wall formation. The protein is UDP-N-acetylenolpyruvoylglucosamine reductase of Pseudomonas savastanoi pv. phaseolicola (strain 1448A / Race 6) (Pseudomonas syringae pv. phaseolicola (strain 1448A / Race 6)).